Here is a 489-residue protein sequence, read N- to C-terminus: UDP-N-acetylmuramoyl-L-alanyl-D-glutamate--2,6-diaminopimelate ligase (489 aa).

Serine 30 is a binding site for UDP-N-acetyl-alpha-D-muramoyl-L-alanyl-D-glutamate. 110-116 (GTNGKTT) contributes to the ATP binding site. Residues 152 to 153 (TT), serine 179, and arginine 187 each bind UDP-N-acetyl-alpha-D-muramoyl-L-alanyl-D-glutamate. Residue lysine 219 is modified to N6-carboxylysine. Residues arginine 381, 405-408 (DNPR), glycine 458, and glutamate 462 contribute to the meso-2,6-diaminopimelate site. The Meso-diaminopimelate recognition motif signature appears at 405–408 (DNPR).

Belongs to the MurCDEF family. MurE subfamily. It depends on Mg(2+) as a cofactor. In terms of processing, carboxylation is probably crucial for Mg(2+) binding and, consequently, for the gamma-phosphate positioning of ATP.

The protein resides in the cytoplasm. The enzyme catalyses UDP-N-acetyl-alpha-D-muramoyl-L-alanyl-D-glutamate + meso-2,6-diaminopimelate + ATP = UDP-N-acetyl-alpha-D-muramoyl-L-alanyl-gamma-D-glutamyl-meso-2,6-diaminopimelate + ADP + phosphate + H(+). Its pathway is cell wall biogenesis; peptidoglycan biosynthesis. Functionally, catalyzes the addition of meso-diaminopimelic acid to the nucleotide precursor UDP-N-acetylmuramoyl-L-alanyl-D-glutamate (UMAG) in the biosynthesis of bacterial cell-wall peptidoglycan. In Syntrophomonas wolfei subsp. wolfei (strain DSM 2245B / Goettingen), this protein is UDP-N-acetylmuramoyl-L-alanyl-D-glutamate--2,6-diaminopimelate ligase.